Reading from the N-terminus, the 60-residue chain is uncharacterized protein (60 aa).

Residues 38–58 traverse the membrane as a helical segment; it reads SILAGGIIPVLFFFPLFLFLY.

It is found in the membrane. This is an uncharacterized protein from Saccharomyces cerevisiae (strain ATCC 204508 / S288c) (Baker's yeast).